A 311-amino-acid polypeptide reads, in one-letter code: p-hydroxybenzoic acid efflux pump subunit AaeA (311 aa).

Residues 11 to 31 (VGITVLVVVLAVIAIFNVWAF) traverse the membrane as a helical segment.

The protein belongs to the membrane fusion protein (MFP) (TC 8.A.1) family.

It is found in the cell inner membrane. In terms of biological role, forms an efflux pump with AaeB. This is p-hydroxybenzoic acid efflux pump subunit AaeA from Yersinia pseudotuberculosis serotype O:3 (strain YPIII).